We begin with the raw amino-acid sequence, 255 residues long: MRILLTNDDGIHAEGLAVLERIARKLSDDVWVVAPETDQSGLAHSLTLLEPLRLRQIDARHFALRGTPTDCVIMGVRHVLPGAPDLVLSGVNSGANMADDVTYSGTVAGAMEGTLLGVRAIALSQEYEYAGDRRIVPWETAEAHAPELIGRLMEAGWPEGVLLNLNFPNCAPEEVKGVRVTAQGKLSHDARLDERRDGRGFPYFWLHFGRGKAPVADDSDIAAIRSGCISMTPLHLDLTAHKVRAELGAALGVEA.

A divalent metal cation is bound by residues D8, D9, S40, and N92.

It belongs to the SurE nucleotidase family. A divalent metal cation is required as a cofactor.

The protein localises to the cytoplasm. It catalyses the reaction a ribonucleoside 5'-phosphate + H2O = a ribonucleoside + phosphate. Its function is as follows. Nucleotidase that shows phosphatase activity on nucleoside 5'-monophosphates. The chain is 5'-nucleotidase SurE from Brucella abortus (strain S19).